The primary structure comprises 194 residues: Adenylate kinase (194 aa).

Glycine 10 to threonine 15 serves as a coordination point for ATP. The segment at serine 30–valine 59 is NMP. AMP contacts are provided by residues threonine 31, arginine 36, glycine 57–valine 59, glycine 85–arginine 88, and glutamine 92. An LID region spans residues asparagine 126–aspartate 142. Residue arginine 127 participates in ATP binding. The AMP site is built by arginine 139 and arginine 150. Alanine 178 provides a ligand contact to ATP.

Belongs to the adenylate kinase family. In terms of assembly, monomer.

Its subcellular location is the cytoplasm. It catalyses the reaction AMP + ATP = 2 ADP. Its pathway is purine metabolism; AMP biosynthesis via salvage pathway; AMP from ADP: step 1/1. Its function is as follows. Catalyzes the reversible transfer of the terminal phosphate group between ATP and AMP. Plays an important role in cellular energy homeostasis and in adenine nucleotide metabolism. This is Adenylate kinase from Azorhizobium caulinodans (strain ATCC 43989 / DSM 5975 / JCM 20966 / LMG 6465 / NBRC 14845 / NCIMB 13405 / ORS 571).